Consider the following 513-residue polypeptide: Na(+)/H(+) antiporter NhaB (513 aa).

A run of 11 helical transmembrane segments spans residues 21–41 (ITIV…SPFI), 88–108 (IIAN…IYFM), 119–139 (LLLS…SAAF), 143–163 (FLDA…FYGV), 208–228 (VGTA…LIIA), 247–267 (LPVL…GVFG), 303–323 (ALIG…VGII), 357–377 (LVVF…APII), 389–409 (LALF…VFVA), 447–467 (ATPN…APLI), and 477–497 (MALP…EYIL).

Belongs to the NhaB Na(+)/H(+) (TC 2.A.34) antiporter family.

Its subcellular location is the cell inner membrane. The catalysed reaction is 2 Na(+)(in) + 3 H(+)(out) = 2 Na(+)(out) + 3 H(+)(in). Functionally, na(+)/H(+) antiporter that extrudes sodium in exchange for external protons. The chain is Na(+)/H(+) antiporter NhaB from Pasteurella multocida (strain Pm70).